The sequence spans 855 residues: Envelope glycoprotein gp160 (855 aa).

Residues Met1–Asp31 form the signal peptide. At Asn32–Ile683 the chain is on the extracellular side. Cysteines 53 and 73 form a disulfide. Asn87, Asn129, Asn140, Asn145, Asn154, Asn158, Asn186, Asn189, Asn199, Asn236, Asn243, Asn264, Asn278, Asn291, and Asn297 each carry an N-linked (GlcNAc...) asparagine; by host glycan. Disulfide bonds link Cys118-Cys207, Cys125-Cys198, Cys130-Cys155, Cys220-Cys249, and Cys230-Cys241. A V1 region spans residues Cys130 to Asn154. A V2 region spans residues Cys155–Cys198. Residues Cys298 to His331 form a V3 region. An intrachain disulfide couples Cys298 to Cys332. N-linked (GlcNAc...) asparagine; by host glycans are attached at residues Asn333, Asn340, and Asn355. Residues Ser364–His374 are CD4-binding loop. Disulfide bonds link Cys378–Cys444 and Cys385–Cys417. Residues Cys385–Cys417 form a V4 region. N-linked (GlcNAc...) asparagine; by host glycosylation is found at Asn386, Asn392, Asn398, Asn404, Asn443, Asn447, Asn460, Asn461, and Asn464. V5 stretches follow at residues Thr459–Gly470 and Ser462–Gly470. Residues Ala511–Ala531 form a fusion peptide region. Residues Lys573 to Leu591 are immunosuppression. Cys597 and Cys603 are oxidised to a cystine. Residues Asn610, Asn615, Asn624, Asn636, and Asn673 are each glycosylated (N-linked (GlcNAc...) asparagine; by host). A coiled-coil region spans residues Arg632–Ala666. The MPER; binding to GalCer stretch occupies residues Glu661 to Lys682. The chain crosses the membrane as a helical span at residues Phe684–Val704. The Cytoplasmic segment spans residues Asn705–Leu855. A YXXL motif; contains endocytosis signal motif is present at residues Tyr711–Leu714. Cys763 carries the S-palmitoyl cysteine; by host lipid modification. Positions Leu854 to Leu855 match the Di-leucine internalization motif motif.

This sequence belongs to the HIV-1 env protein family. As to quaternary structure, the mature envelope protein (Env) consists of a homotrimer of non-covalently associated gp120-gp41 heterodimers. The resulting complex protrudes from the virus surface as a spike. There seems to be as few as 10 spikes on the average virion. Interacts with host CD4, CCR5 and CXCR4. Gp120 also interacts with the C-type lectins CD209/DC-SIGN and CLEC4M/DC-SIGNR (collectively referred to as DC-SIGN(R)). Gp120 and gp41 interact with GalCer. Gp120 interacts with host ITGA4/ITGB7 complex; on CD4+ T-cells, this interaction results in rapid activation of integrin ITGAL/LFA-1, which facilitates efficient cell-to-cell spreading of HIV-1. Gp120 interacts with cell-associated heparan sulfate; this interaction increases virus infectivity on permissive cells and may be involved in infection of CD4- cells. In terms of assembly, the mature envelope protein (Env) consists of a homotrimer of non-covalently associated gp120-gp41 heterodimers. The resulting complex protrudes from the virus surface as a spike. There seems to be as few as 10 spikes on the average virion. Post-translationally, highly glycosylated by host. The high number of glycan on the protein is reffered to as 'glycan shield' because it contributes to hide protein sequence from adaptive immune system. In terms of processing, palmitoylation of the transmembrane protein and of Env polyprotein (prior to its proteolytic cleavage) is essential for their association with host cell membrane lipid rafts. Palmitoylation is therefore required for envelope trafficking to classical lipid rafts, but not for viral replication. Specific enzymatic cleavages in vivo yield mature proteins. Envelope glycoproteins are synthesized as an inactive precursor that is heavily N-glycosylated and processed likely by host cell furin in the Golgi to yield the mature SU and TM proteins. The cleavage site between SU and TM requires the minimal sequence [KR]-X-[KR]-R. About 2 of the 9 disulfide bonds of gp41 are reduced by P4HB/PDI, following binding to CD4 receptor.

It localises to the virion membrane. Its subcellular location is the host cell membrane. The protein localises to the host endosome membrane. Its function is as follows. Oligomerizes in the host endoplasmic reticulum into predominantly trimers. In a second time, gp160 transits in the host Golgi, where glycosylation is completed. The precursor is then proteolytically cleaved in the trans-Golgi and thereby activated by cellular furin or furin-like proteases to produce gp120 and gp41. In terms of biological role, attaches the virus to the host lymphoid cell by binding to the primary receptor CD4. This interaction induces a structural rearrangement creating a high affinity binding site for a chemokine coreceptor like CXCR4 and/or CCR5. Acts as a ligand for CD209/DC-SIGN and CLEC4M/DC-SIGNR, which are respectively found on dendritic cells (DCs), and on endothelial cells of liver sinusoids and lymph node sinuses. These interactions allow capture of viral particles at mucosal surfaces by these cells and subsequent transmission to permissive cells. HIV subverts the migration properties of dendritic cells to gain access to CD4+ T-cells in lymph nodes. Virus transmission to permissive T-cells occurs either in trans (without DCs infection, through viral capture and transmission), or in cis (following DCs productive infection, through the usual CD4-gp120 interaction), thereby inducing a robust infection. In trans infection, bound virions remain infectious over days and it is proposed that they are not degraded, but protected in non-lysosomal acidic organelles within the DCs close to the cell membrane thus contributing to the viral infectious potential during DCs' migration from the periphery to the lymphoid tissues. On arrival at lymphoid tissues, intact virions recycle back to DCs' cell surface allowing virus transmission to CD4+ T-cells. Acts as a class I viral fusion protein. Under the current model, the protein has at least 3 conformational states: pre-fusion native state, pre-hairpin intermediate state, and post-fusion hairpin state. During fusion of viral and target intracellular membranes, the coiled coil regions (heptad repeats) assume a trimer-of-hairpins structure, positioning the fusion peptide in close proximity to the C-terminal region of the ectodomain. The formation of this structure appears to drive apposition and subsequent fusion of viral and target cell membranes. Complete fusion occurs in host cell endosomes and is dynamin-dependent, however some lipid transfer might occur at the plasma membrane. The virus undergoes clathrin-dependent internalization long before endosomal fusion, thus minimizing the surface exposure of conserved viral epitopes during fusion and reducing the efficacy of inhibitors targeting these epitopes. Membranes fusion leads to delivery of the nucleocapsid into the cytoplasm. The polypeptide is Envelope glycoprotein gp160 (Homo sapiens (Human)).